Consider the following 92-residue polypeptide: Small ribosomal subunit protein uS19c (92 aa).

The protein belongs to the universal ribosomal protein uS19 family.

The protein resides in the plastid. It is found in the chloroplast. Functionally, protein S19 forms a complex with S13 that binds strongly to the 16S ribosomal RNA. The protein is Small ribosomal subunit protein uS19c of Manihot esculenta (Cassava).